A 226-amino-acid polypeptide reads, in one-letter code: Cytidylate kinase (226 aa).

Residue 10-18 (GPASSGKST) coordinates ATP.

Belongs to the cytidylate kinase family. Type 1 subfamily.

It is found in the cytoplasm. The enzyme catalyses CMP + ATP = CDP + ADP. It carries out the reaction dCMP + ATP = dCDP + ADP. This chain is Cytidylate kinase, found in Streptococcus pyogenes serotype M1.